Reading from the N-terminus, the 418-residue chain is UDP-N-acetyl-D-mannosamine dehydrogenase (418 aa).

NAD(+) contacts are provided by Tyr10, Ile11, Asp30, Thr85, and Thr119. Positions 152, 153, 204, 208, 211, 242, 244, 249, and 255 each coordinate UDP-N-acetyl-alpha-D-mannosaminouronate. The Proton donor/acceptor role is filled by Lys204. Residue Cys258 is the Nucleophile of the active site. Residue Lys261 coordinates NAD(+). UDP-N-acetyl-alpha-D-mannosaminouronate-binding residues include Tyr318 and Lys319. Arg326 is an NAD(+) binding site. Residue Arg398 participates in UDP-N-acetyl-alpha-D-mannosaminouronate binding.

It belongs to the UDP-glucose/GDP-mannose dehydrogenase family. As to quaternary structure, homodimer.

The enzyme catalyses UDP-N-acetyl-alpha-D-mannosamine + 2 NAD(+) + H2O = UDP-N-acetyl-alpha-D-mannosaminouronate + 2 NADH + 3 H(+). In terms of biological role, catalyzes the four-electron oxidation of UDP-N-acetyl-D-mannosamine (UDP-ManNAc), reducing NAD(+) and releasing UDP-N-acetylmannosaminuronic acid (UDP-ManNAcA). The chain is UDP-N-acetyl-D-mannosamine dehydrogenase from Pyrococcus horikoshii (strain ATCC 700860 / DSM 12428 / JCM 9974 / NBRC 100139 / OT-3).